The sequence spans 140 residues: Thioredoxin M-type, chloroplastic (140 aa).

The transit peptide at M1–A34 directs the protein to the chloroplast. Residues E35–N140 form the Thioredoxin domain. Active-site nucleophile residues include C64 and C67. C64 and C67 form a disulfide bridge.

Belongs to the thioredoxin family. Plant M-type subfamily. Forms a complex with heterodimeric ferredoxin-thioredoxin reductase (FTR) and ferredoxin.

Its subcellular location is the plastid. It is found in the chloroplast. Functionally, participates in various redox reactions through the reversible oxidation of the active center dithiol to a disulfide. The M form is known to activate NADP-malate dehydrogenase. The chain is Thioredoxin M-type, chloroplastic (TRXM) from Chlamydomonas reinhardtii (Chlamydomonas smithii).